Consider the following 367-residue polypeptide: Prenyltransferase idtC (367 aa).

A signal peptide spans 1-22 (MTTLAWFAGRSMVLDLAALTSA). The span at 32–42 (TSTPTSTPTST) shows a compositional bias: low complexity. A disordered region spans residues 32–84 (TSTPTSTPTSTDKAGTPPGSTIHHYGYPQGSVTKPNNSKTEKENGSPKDSKGN). The N-linked (GlcNAc...) asparagine glycan is linked to N67. Positions 70 to 82 (KTEKENGSPKDSK) are enriched in basic and acidic residues. H132 contacts substrate. Mg(2+)-binding residues include D139 and D143. R148 contacts substrate. N150 carries an N-linked (GlcNAc...) asparagine glycan. The substrate site is built by K233, T234, Q264, N271, and K281.

This sequence belongs to the FPP/GGPP synthase family. The cofactor is Mg(2+).

The protein operates within secondary metabolite biosynthesis. Its function is as follows. Prenyltransferase; part of the gene cluster that mediates the biosynthesis of paspalitrems, indole-diterpene (IDT) mycotoxins that are potent tremorgens in mammals. The geranylgeranyl diphosphate (GGPP) synthase idtG is proposed to catalyze the first step in IDT biosynthesis via catalysis of a series of iterative condensations of isopentenyl diphosphate (IPP) with dimethylallyl diphosphate (DMAPP), geranyl diphosphate (GPP), and farnesyl diphosphate (FPP), to form GGPP. Condensation of indole-3-glycerol phosphate with GGPP by the prenyltransferase idtC then forms 3-geranylgeranylindole (3-GGI). Epoxidation of the two terminal alkenes of the geranylgeranyl moiety by the FAD-dependent monooxygenase idtM, and cyclization by the terpene cyclase idtB then leads to the production of paspaline. The cytochrome P450 monooxygenase idtP then catalyzes oxidative elimination of the pendant methyl group at C-12 of paspaline and generates the C-10 ketone to yield 13-desoxypaxilline. The cytochrome P450 monooxygenase idtQ may catalyze the C-13 oxidation of 13-desoxypaxilline to afford paxilline. Considering that both paspalicine and paxilline were detected in C.paspali, idtQ also catalyzes the formation of paspalinine from 13-desoxypaxilline via paspalicine as an intermediate. Finally, the alpha-prenyltransferase idtF prenylates paspalinine at the C-20 or the C-21 positions to yield paspalitrems A and C, respectively. The hydroxylation of paspalitrem A at C-32 by a still unknown oxidase affords paspalitrem B. The polypeptide is Prenyltransferase idtC (Claviceps paspali (Rye ergot fungus)).